The following is a 305-amino-acid chain: Taste receptor type 2 member 136 (305 aa).

The Extracellular segment spans residues 1–9 (MMSFLVSIA). A helical transmembrane segment spans residues 10–30 (SIAMLVKIVLGTFANVFIVLV). Residues 31-46 (NFTDCIKKRKFLLADR) are Cytoplasmic-facing. The chain crosses the membrane as a helical span at residues 47 to 67 (ILTVLAIFRFDLLWIILMNWS). At 68–69 (SS) the chain is on the extracellular side. The chain crosses the membrane as a helical span at residues 70 to 90 (VFHVGLYFQVRFCICVVWIVT). Over 91-99 (NHFNTWLAN) the chain is Cytoplasmic. A helical transmembrane segment spans residues 100-120 (ILSILYLLKIDNFSNLIFLGL). At 121-127 (KGKIKCP) the chain is on the extracellular side. The chain crosses the membrane as a helical span at residues 128 to 148 (YIVLLPCFVLLFPNLIMVTIC). The Cytoplasmic portion of the chain corresponds to 149–176 (ETTQANGHQGNLTGKTKLTYFTNLIAMT). The helical transmembrane segment at 177-197 (FTLGSLVPFTTFMICFLLLIC) threads the bilayer. Residues 198 to 223 (SLCKHLRTMRLYGKGSQGPSASTHIK) lie on the Extracellular side of the membrane. A helical transmembrane segment spans residues 224 to 244 (VLQVLISFLLLFSMFILLLII). Topologically, residues 245–305 (SDYNYTKSLE…ARFWLKEKKP (61 aa)) are cytoplasmic.

Belongs to the G-protein coupled receptor T2R family.

Its subcellular location is the membrane. Its function is as follows. Putative taste receptor which may play a role in the perception of bitterness. The sequence is that of Taste receptor type 2 member 136 (Tas2r136) from Mus musculus (Mouse).